The sequence spans 260 residues: MKGFILALQFFTRIPININIDFNEKNIKRAFYFLPLIGGLIAGLVLIPIYFLPQKYIEISGFISLLLYLFLTGSIHLDGVGDTIDGFFSARKKEKILEIMQDPRIGTYGTIGLNVFLLLRYINYSTIIPDAGLLILAGIISRLSGLAVVVFSKPAKDTGLGLLFHKSASKFSFFFWLVLVCFLSLFTPEIAAFSKIQGTFILVERLKYLLLPLTAFILTFIIIRISYKKIGGITGDVNGLIVELTELAVLSTSFFINVHL.

A run of 7 helical transmembrane segments spans residues 31-51 (FYFL…PIYF), 57-77 (IEIS…SIHL), 108-128 (YGTI…STII), 131-151 (AGLL…VVVF), 173-193 (FFFW…IAAF), 206-226 (LKYL…IRIS), and 240-260 (LIVE…NVHL).

The protein belongs to the CobS family. The cofactor is Mg(2+).

It localises to the cell inner membrane. The enzyme catalyses alpha-ribazole + adenosylcob(III)inamide-GDP = adenosylcob(III)alamin + GMP + H(+). It carries out the reaction alpha-ribazole 5'-phosphate + adenosylcob(III)inamide-GDP = adenosylcob(III)alamin 5'-phosphate + GMP + H(+). It participates in cofactor biosynthesis; adenosylcobalamin biosynthesis; adenosylcobalamin from cob(II)yrinate a,c-diamide: step 7/7. In terms of biological role, joins adenosylcobinamide-GDP and alpha-ribazole to generate adenosylcobalamin (Ado-cobalamin). Also synthesizes adenosylcobalamin 5'-phosphate from adenosylcobinamide-GDP and alpha-ribazole 5'-phosphate. This Treponema denticola (strain ATCC 35405 / DSM 14222 / CIP 103919 / JCM 8153 / KCTC 15104) protein is Adenosylcobinamide-GDP ribazoletransferase.